Here is a 136-residue protein sequence, read N- to C-terminus: ATP synthase epsilon chain (136 aa).

The protein belongs to the ATPase epsilon chain family. As to quaternary structure, F-type ATPases have 2 components, CF(1) - the catalytic core - and CF(0) - the membrane proton channel. CF(1) has five subunits: alpha(3), beta(3), gamma(1), delta(1), epsilon(1). CF(0) has three main subunits: a, b and c.

It localises to the cell inner membrane. Produces ATP from ADP in the presence of a proton gradient across the membrane. This chain is ATP synthase epsilon chain, found in Persephonella marina (strain DSM 14350 / EX-H1).